The chain runs to 105 residues: uncharacterized protein (105 aa).

Residues 31–47 (SVNLPSPSVKPSVTPSV) show a composition bias toward low complexity. The interval 31-80 (SVNLPSPSVKPSVTPSVKKPPHVIRSDYSKPREKPAKVAKKPTVKNDKKP) is disordered. A compositionally biased stretch (basic and acidic residues) spans 54–66 (IRSDYSKPREKPA).

This is an uncharacterized protein from Caenorhabditis elegans.